The primary structure comprises 340 residues: MAELYYDNQADLNRLKHKPIAIIGFGSQGHAHARNLADSGLDVRVGLYPGSKSWAKVEEAGLKVMTVAEAAREAQIVMILTPDIGQAELYREHIAPAMEPGKTLMFAHGFNIRFGQIVPPAGIDVSMVAPKAPGHRVREVFVQGGGVPALIAVEQDATGGAFEDALAYAKGLGCTRAGVLRTTFAEETETDLFGEQVVLCGGVSALVKAAFETLVEAGYQPEVAYFECMHELKLIVDLFYQGGLNYMRYSVSDTAEWGDYTAGPKIITEQTRAAMRQILADIQSGAFAEDWIEENHNGRPRFNAYRQADINHPIEQIGRELRRMMPFVNPREVKPGEGGA.

The 181-residue stretch at 2–182 (AELYYDNQAD…GCTRAGVLRT (181 aa)) folds into the KARI N-terminal Rossmann domain. Residues 25–28 (FGSQ), Ser-51, Ser-53, and 83–86 (DIGQ) each bind NADP(+). The active site involves His-108. Residue Gly-134 coordinates NADP(+). One can recognise a KARI C-terminal knotted domain in the interval 183 to 328 (TFAEETETDL…RELRRMMPFV (146 aa)). Asp-191, Glu-195, Glu-227, and Glu-231 together coordinate Mg(2+). Ser-252 contributes to the substrate binding site.

The protein belongs to the ketol-acid reductoisomerase family. Mg(2+) is required as a cofactor.

It catalyses the reaction (2R)-2,3-dihydroxy-3-methylbutanoate + NADP(+) = (2S)-2-acetolactate + NADPH + H(+). The catalysed reaction is (2R,3R)-2,3-dihydroxy-3-methylpentanoate + NADP(+) = (S)-2-ethyl-2-hydroxy-3-oxobutanoate + NADPH + H(+). It functions in the pathway amino-acid biosynthesis; L-isoleucine biosynthesis; L-isoleucine from 2-oxobutanoate: step 2/4. The protein operates within amino-acid biosynthesis; L-valine biosynthesis; L-valine from pyruvate: step 2/4. In terms of biological role, involved in the biosynthesis of branched-chain amino acids (BCAA). Catalyzes an alkyl-migration followed by a ketol-acid reduction of (S)-2-acetolactate (S2AL) to yield (R)-2,3-dihydroxy-isovalerate. In the isomerase reaction, S2AL is rearranged via a Mg-dependent methyl migration to produce 3-hydroxy-3-methyl-2-ketobutyrate (HMKB). In the reductase reaction, this 2-ketoacid undergoes a metal-dependent reduction by NADPH to yield (R)-2,3-dihydroxy-isovalerate. This chain is Ketol-acid reductoisomerase (NADP(+)), found in Chloroflexus aggregans (strain MD-66 / DSM 9485).